The following is a 245-amino-acid chain: Membrane-associated progesterone-binding protein 4 (245 aa).

The chain crosses the membrane as a helical span at residues 6 to 26 (RFLLSPFVGVTFIVVLVSLYF). One can recognise a Cytochrome b5 heme-binding domain in the interval 39-138 (KRLFSAEELA…RTYTPVGKLV (100 aa)). The steroid-binding stretch occupies residues 45 to 138 (EELALYNGTD…RTYTPVGKLV (94 aa)).

The protein belongs to the cytochrome b5 family. MAPR subfamily.

The protein localises to the membrane. In Arabidopsis thaliana (Mouse-ear cress), this protein is Membrane-associated progesterone-binding protein 4.